The primary structure comprises 333 residues: PRKC apoptosis WT1 regulator protein (333 aa).

Low complexity-rich tracts occupy residues 1–14 (MATG…STTT), 33–51 (PAGP…PAGS), 66–80 (GPAG…APGA), and 105–116 (PSAAAASGAPGS). Residues 1-262 (MATGGYRSGG…ASFSSSSTLE (262 aa)) form a disordered region. The B30.2/SPRY domain-binding motif signature appears at 62–66 (ELNHG). The Nuclear localization signal motif lies at 138–154 (RKGKGQIEKRKLREKRR). The selective for apoptosis induction in cancer cells (SAC) stretch occupies residues 138-196 (RKGKGQIEKRKLREKRRSTGVVNIPAAECLDEYEDDEAGQKERKREDAITQQNTIQNEA). Position 156 is a phosphothreonine; by PKA (Thr-156). The segment covering 175–185 (AGQKERKREDA) has biased composition (basic and acidic residues). The span at 186-196 (ITQQNTIQNEA) shows a compositional bias: polar residues. Ser-224 is modified (phosphoserine). A compositionally biased stretch (basic and acidic residues) spans 235 to 248 (PRTDRSGFSRHNRD). Residues 255 to 333 (FSSSSTLEKR…LLKVVGQLTR (79 aa)) are a coiled coil. A leucine-zipper region spans residues 293–333 (IGKLKEEIDLLNRDLDDMEDENEQLKQENKTLLKVVGQLTR).

Homooligomer. Interacts (via the C-terminal region) with WT1. Interacts with THAP1. Interacts with AATF. Interacts with BACE1. Interacts with SPSB1 (via B30.2/SPRY domain); this interaction is direct and occurs in association with the Elongin BC complex. Interacts with SPSB2 (via B30.2/SPRY domain); this interaction occurs in association with the Elongin BC complex. Interacts with SPSB4 (via B30.2/SPRY domain); this interaction occurs in association with the Elongin BC complex. Component of a ternary complex composed of SQSTM1 and PRKCZ. Interacts with actin. In terms of processing, preferentially phosphorylated at the Thr-156 by PKC in cancer cells.

Its subcellular location is the cytoplasm. It is found in the nucleus. Its function is as follows. Pro-apoptotic protein capable of selectively inducing apoptosis in cancer cells, sensitizing the cells to diverse apoptotic stimuli and causing regression of tumors in animal models. Induces apoptosis in certain cancer cells by activation of the Fas prodeath pathway and coparallel inhibition of NF-kappa-B transcriptional activity. Inhibits the transcriptional activation and augments the transcriptional repression mediated by WT1. Down-regulates the anti-apoptotic protein BCL2 via its interaction with WT1. Also seems to be a transcriptional repressor by itself. May be directly involved in regulating the amyloid precursor protein (APP) cleavage activity of BACE1. The chain is PRKC apoptosis WT1 regulator protein (Pawr) from Mus musculus (Mouse).